The chain runs to 439 residues: GTPase Obg (439 aa).

One can recognise an Obg domain in the interval 3–162 (GEFYDSARIF…REIELELKLL (160 aa)). The region spanning 163 to 333 (ADVGLIGFPN…LLQRVAERLR (171 aa)) is the OBG-type G domain. GTP-binding positions include 169–176 (GFPNAGKS), 194–198 (FTTLQ), 215–218 (DIPG), 285–288 (NKAD), and 314–316 (SAA). 2 residues coordinate Mg(2+): serine 176 and threonine 196. The 78-residue stretch at 351–428 (VPEVDERLYT…IEQAAFDWED (78 aa)) folds into the OCT domain.

The protein belongs to the TRAFAC class OBG-HflX-like GTPase superfamily. OBG GTPase family. Monomer. Mg(2+) is required as a cofactor.

The protein resides in the cytoplasm. In terms of biological role, an essential GTPase which binds GTP, GDP and possibly (p)ppGpp with moderate affinity, with high nucleotide exchange rates and a fairly low GTP hydrolysis rate. Plays a role in control of the cell cycle, stress response, ribosome biogenesis and in those bacteria that undergo differentiation, in morphogenesis control. The protein is GTPase Obg of Roseiflexus castenholzii (strain DSM 13941 / HLO8).